Here is a 301-residue protein sequence, read N- to C-terminus: dTDP-4-dehydrorhamnose reductase (301 aa).

NADH-binding positions include 10–12 (GQV), Asp-30, 39–40 (DF), and 63–65 (AHT). 11 to 12 (QV) is an NADPH binding site. Residues 39-40 (DF), 63-65 (AHT), and Tyr-102 contribute to the NADPH site. 104-105 (TD) is a binding site for dTDP-beta-L-rhamnose. Tyr-129 and Lys-133 together coordinate NADH. The NADPH site is built by Tyr-129 and Lys-133. Residue Tyr-129 is the Proton donor/acceptor of the active site. Trp-155 lines the dTDP-beta-L-rhamnose pocket.

It belongs to the dTDP-4-dehydrorhamnose reductase family. In terms of assembly, homodimer. Mg(2+) serves as cofactor.

It carries out the reaction dTDP-beta-L-rhamnose + NADP(+) = dTDP-4-dehydro-beta-L-rhamnose + NADPH + H(+). It participates in carbohydrate biosynthesis; dTDP-L-rhamnose biosynthesis. It functions in the pathway bacterial outer membrane biogenesis; LPS O-antigen biosynthesis. Its function is as follows. Involved in the biosynthesis of the dTDP-L-rhamnose which is an important component of lipopolysaccharide (LPS). Catalyzes the reduction of dTDP-6-deoxy-L-lyxo-4-hexulose to yield dTDP-L-rhamnose. RmlD uses NADH and NADPH nearly equally well. The polypeptide is dTDP-4-dehydrorhamnose reductase (Escherichia coli).